We begin with the raw amino-acid sequence, 32 residues long: GCKKRKARKRPKCKKARKRPKCKRRKVAKKKC.

Residues Gly-1–Cys-32 form a disordered region.

In terms of tissue distribution, testis.

Its subcellular location is the nucleus. It is found in the chromosome. In terms of biological role, protamines substitute for histones in the chromatin of sperm during the haploid phase of spermatogenesis. They compact sperm DNA into a highly condensed, stable and inactive complex. The protein is Protamine S4 of Scyliorhinus canicula (Small-spotted catshark).